The following is a 515-amino-acid chain: Putative BTB/POZ domain-containing protein At3g49970 (515 aa).

A BTB domain is found at 1-63; the sequence is MLEKLSFLLH…CYDISFEINT (63 aa). Positions 149 to 409 constitute an NPH3 domain; it reads DWWADDLAVL…NSDSPAPATA (261 aa). Y350 carries the phosphotyrosine modification. A disordered region spans residues 395 to 417; that stretch reads QENLSNSDSPAPATAEKTLSPPE. A coiled-coil region spans residues 418–452; that stretch reads LSSYKNELSKLNRENQYLKLELLKVKMKFKELEKE. Residues 494–515 form a disordered region; that stretch reads INPFGLKQGQTKQPKSRRHSIS.

Belongs to the NPH3 family.

It participates in protein modification; protein ubiquitination. Functionally, may act as a substrate-specific adapter of an E3 ubiquitin-protein ligase complex (CUL3-RBX1-BTB) which mediates the ubiquitination and subsequent proteasomal degradation of target proteins. This Arabidopsis thaliana (Mouse-ear cress) protein is Putative BTB/POZ domain-containing protein At3g49970.